Consider the following 230-residue polypeptide: MLVTLTQSQARVIGVLLEKEVTTPEQYPLSLNSVTTACNQKSNREPVMELTELEVQNTLDELHAKNLIFEQSGSRATRYKHRFCNTEFSDLQLTPQQLAIICVMLLRGPQTPGELRTRAQRMAGFTHVDEVEKALNELMDVNGEQLVVRLEREPGKRESRYAQQFYKDTNEVISHEPAIASKSSQPNASNTTVATNDTAQEARICALEDTVTQLRCELEQLKQTLDELTR.

The protein belongs to the UPF0502 family.

The chain is UPF0502 protein Patl_1161 from Pseudoalteromonas atlantica (strain T6c / ATCC BAA-1087).